The following is a 1947-amino-acid chain: MIKKNLFKDFSRFSFVQSSIKNNVRCHSKLKLVQPFFIKTKQERNKKFLSSYKFSEIQLITIDLASPEKIKEWAEKKLPNGKIFGQVTNPNTLHYKTLKPLKGGLFCERIFGPIKDFECACGIQKQKPFNRIISFQNKQFCSKCDIEYTWSDIRRYQLGYIQLVTPVTHLWYLKGMPSYIRSVLGAKKKHIEAIAYCSEIVTIDQAWKPNRLIPFPETISSVALSSKKRNTFVNKEIVNIQLTYNNFKKFNVNNTRSLYVSINKKLFKKQFSNNSYNCTCVDNEIQNPIFFLKYFNINFLKPQNLKELKVLYINPDFYKVENYPYKNQVKFEFYQKICRSFIKTSLNNHKPIYALNYLSHSFLNSKVKIFSHFEHIDIHTMYVFNEEILINRFSNLARLKKNGKSKKKIGYIHSKKIHININKHLLYFKNKKLKNLQLSNNLKLIIIISNNASLNYFKNWSNTFNCMNTLILKMQFVNKKLHFQYYRSFFNTHTIERVYFNFFSLDYLKNSNFFVNFSKLLALNLLKFMKSNLFNIFIIPIPTILDNFIFKLSLDSQFQRLLNSLSIQKQKVLNSNSVISKSNKIFKKQFFIKNFSLYDEAIEILWQRFWKFGYYFTSNNMNNKLCKIITKFNKNNNGLRSTLPSWLKLIKKLIKKTQIDKKSNQNLLNFRVNVIHTNTQNKFSLFVNLIKIYLKKVLFLFQIAPENIKNIYIKKSIFIFQELRNKNFKYRNFRTQIKKIVIKLFGLELLPWVLSQFIFTSKIFYQFQKSKFSFYHNSNFLTFSRRHSGRNLIKKIKESSFLNFQIGVNNINTIFHYKYSFNCLPSCHIPNYKCRQKFFIYKNKIENILKLKKFRLFFNIWLSRFLKNNISVLNVVVNLKLNNINSNNLQTLNLLFYQKKWLLKKKQIFYNYAMLKEFHSKLLIVGTLHDFSNFIKLIYSSSYKNETLINIFSIQIQPFYKFNFIQKIRKYLNSEYYNSFDSGRTKHYLRKFLNKDSDNLFFKQFNYVYYFILFSSIISTQTIERGSLTSLNNQQFFLNLLCFFKLAKKNIFKKYSWLTSIQKYFYSRQIIKYKKKQQQKSMLKFVKKKTFFNKFLDLINSFIYDYQKRLKLLKKHSIIQLILKKKMYIFYFLKKLQNKLINEIQKYYFYEFEKKKFINIEFNLNNFKNIVIFMNLKKKILFLNSVLFQSQTNFFNKHANLNIFNNSYNYMYIDFNNFLSIGQFWQILINIFKNKINKYYLLSRSLPFIISNDYVKIDPLIKKFHDDLKHQVCFNSFLIKLTFYNSTLLYPLQNIIKNNNKVLQTRQQYYKIIKSNNLFLTNYFKKIRGNFTELSIKKFENIHTIVSCIGYFGYQDILYHQIRELKKNDYFRNFYLKFIKHDLSNNFNEAIFSVISESRISYNDSIFWNNIYSLSNRYSWKSDIELNIFLCYMLSPETPSDILIPLYKQRIHSSNVLREEPPIAGGGIILKLLKELDLPEMKKIDIQLQTILKKIPNKLHEIEVLLKHNQTNLKLLKYYSLKRRTVIEIEKSILRKLKYIRRLNWVSAKPEYMIIRNLPVLPADLRPIFKIQQQLTASDLNRLYQKVIYRNDRLKRFLKNSTTSNSFEMLFAQRMLQEAVDNLIENGKDINSIETDSRGRPLKSLGELLKGKKGRFRQNLLGKRVDYSGRSVIVVGPKLKLHECGLPIEMAIELFLPFLIKEILKNKYALTVRSAKIYIKKHRIKITQLLRQVVKRQPILLNRAPTLHRLGIQAFLPKLVEGKAILLHPLVCSAFNADFDGDQMAVHVPITNEARIEAWKLVLSRNNLLSPATGEPILLPSQDMVLGCYYLTIENLQSLTQKKFRINRKILNQRNYIFSDFEKIFIAYQRNQINLHTNIWVIFNNTIESDSILQEPTEIQVLFSGQYIKVYSDYYQKFNRNGKIYNQVVRTTPGRILFNLMLNNCFN.

The Zn(2+) site is built by C119, C121, C141, and C144. Mg(2+) is bound by residues D1778, D1780, and D1782.

This sequence belongs to the RNA polymerase beta' chain family. RpoC1 subfamily. In plastids the minimal PEP RNA polymerase catalytic core is composed of four subunits: alpha, beta, beta', and beta''. When a (nuclear-encoded) sigma factor is associated with the core the holoenzyme is formed, which can initiate transcription. The cofactor is Mg(2+). It depends on Zn(2+) as a cofactor.

Its subcellular location is the plastid. It is found in the chloroplast. It carries out the reaction RNA(n) + a ribonucleoside 5'-triphosphate = RNA(n+1) + diphosphate. Functionally, DNA-dependent RNA polymerase catalyzes the transcription of DNA into RNA using the four ribonucleoside triphosphates as substrates. In Oedogonium cardiacum (Filamentous green alga), this protein is DNA-directed RNA polymerase subunit beta'.